A 391-amino-acid chain; its full sequence is Succinate--CoA ligase [ADP-forming] subunit beta (391 aa).

The 240-residue stretch at 9–248 (KDILRKFGVA…ISEEDPFEVE (240 aa)) folds into the ATP-grasp domain. ATP is bound by residues Lys50, 57-59 (GRG), Glu103, Met106, and Glu111. Asn203 and Asp217 together coordinate Mg(2+). Substrate-binding positions include Asn268 and 325–327 (GIV).

It belongs to the succinate/malate CoA ligase beta subunit family. In terms of assembly, heterotetramer of two alpha and two beta subunits. Requires Mg(2+) as cofactor.

It catalyses the reaction succinate + ATP + CoA = succinyl-CoA + ADP + phosphate. The enzyme catalyses GTP + succinate + CoA = succinyl-CoA + GDP + phosphate. Its pathway is carbohydrate metabolism; tricarboxylic acid cycle; succinate from succinyl-CoA (ligase route): step 1/1. Succinyl-CoA synthetase functions in the citric acid cycle (TCA), coupling the hydrolysis of succinyl-CoA to the synthesis of either ATP or GTP and thus represents the only step of substrate-level phosphorylation in the TCA. The beta subunit provides nucleotide specificity of the enzyme and binds the substrate succinate, while the binding sites for coenzyme A and phosphate are found in the alpha subunit. The sequence is that of Succinate--CoA ligase [ADP-forming] subunit beta from Chlorobium luteolum (strain DSM 273 / BCRC 81028 / 2530) (Pelodictyon luteolum).